Here is a 589-residue protein sequence, read N- to C-terminus: Coronatine-insensitive protein homolog 2 (589 aa).

The F-box domain maps to 18 to 59; sequence IPDVALGLVMGFVEDPWDRDAISLVCRHWCRVDALSRKHVTV. Jasmonate is bound by residues R87, R352, R414, and R501.

Interacts with TIFY9/JAZ5, TIFY11C/JAZ11 and TIFY11D/JAZ12 in a coronatine-dependent manner.

Its function is as follows. Involved in jasmonate (JA) signaling. Required for jasmonate signaling in plant defense responses. Component of SCF(COI1) E3 ubiquitin ligase complexes, which may mediate the ubiquitination and subsequent proteasomal degradation of target proteins, including TIFY/JAZ family. The polypeptide is Coronatine-insensitive protein homolog 2 (Oryza sativa subsp. indica (Rice)).